A 295-amino-acid chain; its full sequence is UDP-N-acetylenolpyruvoylglucosamine reductase (295 aa).

An FAD-binding PCMH-type domain is found at 24–188; it reads KVGGNAEIFF…LKAVFKVNKG (165 aa). Arg168 is an active-site residue. Ser217 (proton donor) is an active-site residue. Glu287 is a catalytic residue.

It belongs to the MurB family. It depends on FAD as a cofactor.

The protein resides in the cytoplasm. The catalysed reaction is UDP-N-acetyl-alpha-D-muramate + NADP(+) = UDP-N-acetyl-3-O-(1-carboxyvinyl)-alpha-D-glucosamine + NADPH + H(+). It participates in cell wall biogenesis; peptidoglycan biosynthesis. Functionally, cell wall formation. This is UDP-N-acetylenolpyruvoylglucosamine reductase from Rickettsia felis (strain ATCC VR-1525 / URRWXCal2) (Rickettsia azadi).